Consider the following 637-residue polypeptide: Chaperone protein DnaK (637 aa).

The residue at position 198 (threonine 198) is a Phosphothreonine; by autocatalysis. Low complexity predominate over residues 601 to 615 (AQQKAQAEQAGADAG). Residues 601 to 637 (AQQKAQAEQAGADAGEQPKQDDDVVDAEFEEVKEDKK) are disordered. Positions 623–637 (DVVDAEFEEVKEDKK) are enriched in acidic residues.

Belongs to the heat shock protein 70 family.

Functionally, acts as a chaperone. This Vibrio atlanticus (strain LGP32) (Vibrio splendidus (strain Mel32)) protein is Chaperone protein DnaK.